A 1801-amino-acid polypeptide reads, in one-letter code: U3 small nucleolar RNA-associated protein 10 (1801 aa).

2 helical membrane passes run 102–122 (LALV…EWLI) and 136–156 (ILTF…AILP). Residues 581 to 619 (DVDVQALLPFMLIALADPSERVRSGAVDALANIGKVVDK) form an HEAT 1 repeat. 2 helical membrane-spanning segments follow: residues 939 to 959 (IQSG…AIVN) and 995 to 1015 (ALLL…HSVM). HEAT repeat units follow at residues 1038–1076 (DQTI…AFEH), 1110–1148 (YSMD…DSLK), 1244–1282 (TLTT…QSPE), 1288–1327 (QTRM…KYGK), and 1756–1794 (LALL…VLGE).

This sequence belongs to the HEATR1/UTP10 family. As to quaternary structure, component of the ribosomal small subunit (SSU) processome.

The protein resides in the nucleus. It localises to the nucleolus. The protein localises to the membrane. In terms of biological role, involved in nucleolar processing of pre-18S ribosomal RNA. Involved in ribosome biosynthesis. The chain is U3 small nucleolar RNA-associated protein 10 from Emericella nidulans (strain FGSC A4 / ATCC 38163 / CBS 112.46 / NRRL 194 / M139) (Aspergillus nidulans).